The sequence spans 118 residues: MNDLKSKSNIKLMKRVLTTYELRKYLKKYFCLTLDNYLVLAYLDVFKNDEGKYFMRDIISYIGIDQSRIVKSVKELSKKGYLNKCRDPHDSRNVIIVVSVKQHNYIKNLLSEININET.

Positions 55–78 (MRDIISYIGIDQSRIVKSVKELSK) form a DNA-binding region, H-T-H motif.

It belongs to the SarA family.

It localises to the cytoplasm. In terms of biological role, transcriptional regulator acting as an intermediary between major regulators SarA and agr and virulence genes. Represses alpha-hemolysin (hla) gene expression. In Staphylococcus aureus (strain Mu50 / ATCC 700699), this protein is HTH-type transcriptional regulator SarT (sarT).